The sequence spans 500 residues: Glycerol kinase (500 aa).

Thr16 serves as a coordination point for ADP. 2 residues coordinate ATP: Thr16 and Thr17. Sn-glycerol 3-phosphate is bound at residue Thr16. ADP is bound at residue Arg20. Positions 86, 87, 138, and 247 each coordinate sn-glycerol 3-phosphate. Positions 86, 87, 138, 247, and 248 each coordinate glycerol. Thr269 and Gly312 together coordinate ADP. Residues Thr269, Gly312, Gln316, and Gly413 each coordinate ATP. 2 residues coordinate ADP: Gly413 and Asn417.

This sequence belongs to the FGGY kinase family.

It carries out the reaction glycerol + ATP = sn-glycerol 3-phosphate + ADP + H(+). The protein operates within polyol metabolism; glycerol degradation via glycerol kinase pathway; sn-glycerol 3-phosphate from glycerol: step 1/1. Inhibited by fructose 1,6-bisphosphate (FBP). Its function is as follows. Key enzyme in the regulation of glycerol uptake and metabolism. Catalyzes the phosphorylation of glycerol to yield sn-glycerol 3-phosphate. This Rippkaea orientalis (strain PCC 8801 / RF-1) (Cyanothece sp. (strain PCC 8801)) protein is Glycerol kinase.